The primary structure comprises 247 residues: DNA polymerase sliding clamp 1 (247 aa).

It belongs to the PCNA family. In terms of assembly, homotrimer. The subunits circularize to form a toroid; DNA passes through its center. Replication factor C (RFC) is required to load the toroid on the DNA.

Sliding clamp subunit that acts as a moving platform for DNA processing. Responsible for tethering the catalytic subunit of DNA polymerase and other proteins to DNA during high-speed replication. This Sulfolobus acidocaldarius (strain ATCC 33909 / DSM 639 / JCM 8929 / NBRC 15157 / NCIMB 11770) protein is DNA polymerase sliding clamp 1.